The primary structure comprises 61 residues: Protein translocase subunit SecE (61 aa).

A helical membrane pass occupies residues 38-58 (GIGMILIGTIGMIIRIIGYLV).

This sequence belongs to the SecE/SEC61-gamma family. Component of the Sec protein translocase complex. Heterotrimer consisting of SecY (alpha), SecG (beta) and SecE (gamma) subunits. The heterotrimers can form oligomers, although 1 heterotrimer is thought to be able to translocate proteins. Interacts with the ribosome. May interact with SecDF, and other proteins may be involved.

Its subcellular location is the cell membrane. Essential subunit of the Sec protein translocation channel SecYEG. Clamps together the 2 halves of SecY. May contact the channel plug during translocation. This chain is Protein translocase subunit SecE, found in Thermococcus kodakarensis (strain ATCC BAA-918 / JCM 12380 / KOD1) (Pyrococcus kodakaraensis (strain KOD1)).